We begin with the raw amino-acid sequence, 423 residues long: Imidazolonepropionase (423 aa).

2 residues coordinate Fe(3+): His-80 and His-82. Zn(2+) contacts are provided by His-80 and His-82. Residues Arg-89, Tyr-152, and His-185 each contribute to the 4-imidazolone-5-propanoate site. Residue Tyr-152 coordinates N-formimidoyl-L-glutamate. Residue His-250 coordinates Fe(3+). His-250 serves as a coordination point for Zn(2+). Gln-253 is a 4-imidazolone-5-propanoate binding site. Position 325 (Asp-325) interacts with Fe(3+). Asp-325 lines the Zn(2+) pocket. Asn-327 and Gly-329 together coordinate N-formimidoyl-L-glutamate. Thr-330 serves as a coordination point for 4-imidazolone-5-propanoate.

This sequence belongs to the metallo-dependent hydrolases superfamily. HutI family. Requires Zn(2+) as cofactor. The cofactor is Fe(3+).

It is found in the cytoplasm. It catalyses the reaction 4-imidazolone-5-propanoate + H2O = N-formimidoyl-L-glutamate. The protein operates within amino-acid degradation; L-histidine degradation into L-glutamate; N-formimidoyl-L-glutamate from L-histidine: step 3/3. Functionally, catalyzes the hydrolytic cleavage of the carbon-nitrogen bond in imidazolone-5-propanoate to yield N-formimidoyl-L-glutamate. It is the third step in the universal histidine degradation pathway. The protein is Imidazolonepropionase of Cupriavidus pinatubonensis (strain JMP 134 / LMG 1197) (Cupriavidus necator (strain JMP 134)).